The following is a 369-amino-acid chain: GDSL esterase/lipase At5g41890 (369 aa).

Residue Ser-32 is the Nucleophile of the active site. Residues Asp-334 and His-337 contribute to the active site.

Belongs to the 'GDSL' lipolytic enzyme family.

The polypeptide is GDSL esterase/lipase At5g41890 (Arabidopsis thaliana (Mouse-ear cress)).